Consider the following 64-residue polypeptide: Large ribosomal subunit protein bL28 (64 aa).

Belongs to the bacterial ribosomal protein bL28 family.

The protein is Large ribosomal subunit protein bL28 of Campylobacter lari (strain RM2100 / D67 / ATCC BAA-1060).